A 193-amino-acid polypeptide reads, in one-letter code: Protein PATRONUS 1 (193 aa).

The DEN-box signature appears at 14–16 (DEN). The D-box signature appears at 46 to 49 (RKAL).

Interacts directly with the anaphase promoting complex/cyclosome (APC/C) through the CDC27B and CDC20-1 subunits. In terms of tissue distribution, expressed in somatic and reproductive tissues. Expressed in inflorescence, young buds, roots and basal portion of young leaves. Expressed in proliferating cells such as apical meristems of roots and shoots, expanding cotyledons and leaves, root vascular tissues, and in stomatal precursor cells.

Its subcellular location is the nucleus. It localises to the cytoplasm. Functionally, required for the maintenance of centromeric cohesion during interkinesis, until meiosis II. Required for regular configuration and segregation of sister chromatids in meiosis II. Also required for centromere cohesion during meiosis I. Involved in spindle organization at the end of telophase I and in meiosis II. Required to prevent precocious release of pericentromeric cohesins during meiosis, but not for cohesion establishment and monopolar orientation of kinetochores at meiosis I. Involved also in somatic development. Regulates mitotic cell division and ploidy stability in somatic cell types. May be involved in the organization of microtubules dynamics. Involved in abiotic stresses and mono- or divalent ions tolerance and may play a role in maintaining meristematic activity under saline conditions. PANS1 and GIG1 are part of a network linking centromere cohesion and cell cycle progression through control of APC/C activity. Regulates the number of dividing cells in root meristem and is necessary for the anaphase onset control through an APC/C-mediated pathway. Involved in maintaining correct chromosome arm cohesion under stress conditions. In Arabidopsis thaliana (Mouse-ear cress), this protein is Protein PATRONUS 1.